The chain runs to 481 residues: Argininosuccinate lyase (481 aa).

Belongs to the lyase 1 family. Argininosuccinate lyase subfamily.

It localises to the cytoplasm. It carries out the reaction 2-(N(omega)-L-arginino)succinate = fumarate + L-arginine. The protein operates within amino-acid biosynthesis; L-arginine biosynthesis; L-arginine from L-ornithine and carbamoyl phosphate: step 3/3. This chain is Argininosuccinate lyase, found in Kineococcus radiotolerans (strain ATCC BAA-149 / DSM 14245 / SRS30216).